The primary structure comprises 493 residues: 3-octaprenyl-4-hydroxybenzoate carboxy-lyase (493 aa).

Residue Asn172 participates in Mn(2+) binding. Prenylated FMN contacts are provided by residues 175–177, 189–191, and 194–195; these read IYR, RWL, and RG. A Mn(2+)-binding site is contributed by Glu238. Asp287 functions as the Proton donor in the catalytic mechanism.

It belongs to the UbiD family. In terms of assembly, homohexamer. It depends on prenylated FMN as a cofactor. Requires Mn(2+) as cofactor.

The protein resides in the cell membrane. The enzyme catalyses a 4-hydroxy-3-(all-trans-polyprenyl)benzoate + H(+) = a 2-(all-trans-polyprenyl)phenol + CO2. It participates in cofactor biosynthesis; ubiquinone biosynthesis. Catalyzes the decarboxylation of 3-octaprenyl-4-hydroxy benzoate to 2-octaprenylphenol, an intermediate step in ubiquinone biosynthesis. This Shewanella putrefaciens (strain CN-32 / ATCC BAA-453) protein is 3-octaprenyl-4-hydroxybenzoate carboxy-lyase.